The primary structure comprises 626 residues: Chaperone protein HtpG (626 aa).

Residues 1–332 (MTNNDTPGMR…TEDLPLNVSR (332 aa)) form an a; substrate-binding region. Positions 333-546 (EVVQSSKVMA…KDSLDSSMEK (214 aa)) are b. The interval 547-626 (MMKMMHAEMP…ELIEAATMSR (80 aa)) is c.

The protein belongs to the heat shock protein 90 family. As to quaternary structure, homodimer.

It is found in the cytoplasm. Molecular chaperone. Has ATPase activity. The sequence is that of Chaperone protein HtpG from Chlorobium phaeobacteroides (strain DSM 266 / SMG 266 / 2430).